A 58-amino-acid chain; its full sequence is Ribosome modulation factor (58 aa).

Belongs to the ribosome modulation factor family.

The protein resides in the cytoplasm. During stationary phase, converts 70S ribosomes to an inactive dimeric form (100S ribosomes). The chain is Ribosome modulation factor from Tolumonas auensis (strain DSM 9187 / NBRC 110442 / TA 4).